The sequence spans 273 residues: Urease accessory protein UreD (273 aa).

It belongs to the UreD family. In terms of assembly, ureD, UreF and UreG form a complex that acts as a GTP-hydrolysis-dependent molecular chaperone, activating the urease apoprotein by helping to assemble the nickel containing metallocenter of UreC. The UreE protein probably delivers the nickel.

It is found in the cytoplasm. In terms of biological role, required for maturation of urease via the functional incorporation of the urease nickel metallocenter. The polypeptide is Urease accessory protein UreD (Rhizobium etli (strain ATCC 51251 / DSM 11541 / JCM 21823 / NBRC 15573 / CFN 42)).